Consider the following 365-residue polypeptide: Class I histocompatibility antigen, Gogo-A*0501 alpha chain (365 aa).

The first 24 residues, 1–24 (MAVVAPRTLLLLLSGALALTQTWA), serve as a signal peptide directing secretion. Positions 25–114 (GSHSMRYFST…ALRYYNQSED (90 aa)) are alpha-1. The Extracellular portion of the chain corresponds to 25–308 (GSHSMRYFST…EPSSQPTIPI (284 aa)). N-linked (GlcNAc...) asparagine glycosylation occurs at Asn110. The alpha-2 stretch occupies residues 115-206 (GSHTIQRMYG…ENGKETLQRT (92 aa)). Cystine bridges form between Cys125–Cys188 and Cys227–Cys283. The tract at residues 207 to 298 (DAPKTHTTHQ…GLPKPLTLRW (92 aa)) is alpha-3. Residues 209 to 295 (PKTHTTHQAV…QHEGLPKPLT (87 aa)) form the Ig-like C1-type domain. Residues 299–308 (EPSSQPTIPI) are connecting peptide. A helical membrane pass occupies residues 309–332 (VGIIAGLVLFGAVIAGAVVAAVRW). The Cytoplasmic segment spans residues 333 to 365 (RRKSSDRKGGSYSQAASSDSAQGSDVSLTACKV). Residues 338–365 (DRKGGSYSQAASSDSAQGSDVSLTACKV) form a disordered region. The segment covering 342–359 (GSYSQAASSDSAQGSDVS) has biased composition (low complexity). Position 343 is a phosphoserine (Ser343). A Phosphotyrosine modification is found at Tyr344. Phosphoserine occurs at positions 345, 349, 352, 356, and 359.

The protein belongs to the MHC class I family. Heterodimer of an alpha chain and a beta chain (beta-2-microglobulin).

It is found in the membrane. Functionally, involved in the presentation of foreign antigens to the immune system. The chain is Class I histocompatibility antigen, Gogo-A*0501 alpha chain from Gorilla gorilla gorilla (Western lowland gorilla).